We begin with the raw amino-acid sequence, 339 residues long: Protein pelota homolog (339 aa).

It belongs to the eukaryotic release factor 1 family. Pelota subfamily. Monomer. A divalent metal cation is required as a cofactor.

It localises to the cytoplasm. Functionally, may function in recognizing stalled ribosomes, interact with stem-loop structures in stalled mRNA molecules, and effect endonucleolytic cleavage of the mRNA. May play a role in the release non-functional ribosomes and degradation of damaged mRNAs. Has endoribonuclease activity. The chain is Protein pelota homolog from Picrophilus torridus (strain ATCC 700027 / DSM 9790 / JCM 10055 / NBRC 100828 / KAW 2/3).